Here is a 477-residue protein sequence, read N- to C-terminus: Bifunctional protein HldE (477 aa).

A ribokinase region spans residues 1–318; sequence MKVTLPEFER…ENAVRGRADT (318 aa). An N6-acetyllysine modification is found at K179. An ATP-binding site is contributed by 195-198; the sequence is NLSE. D264 is an active-site residue. The segment at 344 to 477 is cytidylyltransferase; the sequence is MTNGVFDILH…IKKIQQDKKG (134 aa).

The protein in the N-terminal section; belongs to the carbohydrate kinase PfkB family. In the C-terminal section; belongs to the cytidylyltransferase family. Homodimer.

The catalysed reaction is D-glycero-beta-D-manno-heptose 7-phosphate + ATP = D-glycero-beta-D-manno-heptose 1,7-bisphosphate + ADP + H(+). It catalyses the reaction D-glycero-beta-D-manno-heptose 1-phosphate + ATP + H(+) = ADP-D-glycero-beta-D-manno-heptose + diphosphate. Its pathway is nucleotide-sugar biosynthesis; ADP-L-glycero-beta-D-manno-heptose biosynthesis; ADP-L-glycero-beta-D-manno-heptose from D-glycero-beta-D-manno-heptose 7-phosphate: step 1/4. The protein operates within nucleotide-sugar biosynthesis; ADP-L-glycero-beta-D-manno-heptose biosynthesis; ADP-L-glycero-beta-D-manno-heptose from D-glycero-beta-D-manno-heptose 7-phosphate: step 3/4. In terms of biological role, catalyzes the phosphorylation of D-glycero-D-manno-heptose 7-phosphate at the C-1 position to selectively form D-glycero-beta-D-manno-heptose-1,7-bisphosphate. Its function is as follows. Catalyzes the ADP transfer from ATP to D-glycero-beta-D-manno-heptose 1-phosphate, yielding ADP-D-glycero-beta-D-manno-heptose. This is Bifunctional protein HldE from Escherichia fergusonii (strain ATCC 35469 / DSM 13698 / CCUG 18766 / IAM 14443 / JCM 21226 / LMG 7866 / NBRC 102419 / NCTC 12128 / CDC 0568-73).